We begin with the raw amino-acid sequence, 204 residues long: Putative t-SNARE coiled-coil homology domain-containing protein L657 (204 aa).

T-SNARE coiled-coil homology domains lie at Ser-9–Val-71 and Asp-140–Thr-202. Residues Val-159 to Ile-181 are a coiled coil.

This is Putative t-SNARE coiled-coil homology domain-containing protein L657 from Acanthamoeba polyphaga (Amoeba).